A 216-amino-acid chain; its full sequence is Maintenance of carboxysome distribution protein A (216 aa).

Residues glycine 16, glycine 17, glycine 19, lysine 20, threonine 21, threonine 22, and glutamine 45 each contribute to the ATP site. Threonine 21 serves as a coordination point for Mg(2+).

Belongs to the ParA family. McdA subfamily. In terms of assembly, self-associates, associates with McdB.

It is found in the cytoplasm. The protein localises to the nucleoid. It carries out the reaction ATP + H2O = ADP + phosphate + H(+). Its function is as follows. McdA and McdB together mediate carboxysome positioning on the nucleoid and prevent their aggregation in the cell. McdA is an ATPase that forms dynamic gradients on the nucleoid in response to adapter protein McdB, which associates with carboxysomes. The interplay between McdA gradients on the nucleoid and McdB-bound carboxysomes result in the equal spacing of Cbs along the cell length. Incorrect positioning (aggregation) of carboxysomes results in reduced CO(2) fixation by encapsulated form 1 ribulose-1,5-bisphosphate carboxylase (RuBisCO, cbbL/cbbS), which leads to slower growth. This is Maintenance of carboxysome distribution protein A from Halothiobacillus neapolitanus (strain ATCC 23641 / c2) (Thiobacillus neapolitanus).